Consider the following 282-residue polypeptide: Acetyl-coenzyme A carboxylase carboxyl transferase subunit beta (282 aa).

A CoA carboxyltransferase N-terminal domain is found at 26 to 282 (QWVKCPETGE…IIRLLNLLME (257 aa)).

Belongs to the AccD/PCCB family. In terms of assembly, acetyl-CoA carboxylase is a heterohexamer composed of biotin carboxyl carrier protein (AccB), biotin carboxylase (AccC) and two subunits each of ACCase subunit alpha (AccA) and ACCase subunit beta (AccD).

It localises to the cytoplasm. The catalysed reaction is N(6)-carboxybiotinyl-L-lysyl-[protein] + acetyl-CoA = N(6)-biotinyl-L-lysyl-[protein] + malonyl-CoA. It participates in lipid metabolism; malonyl-CoA biosynthesis; malonyl-CoA from acetyl-CoA: step 1/1. Its function is as follows. Component of the acetyl coenzyme A carboxylase (ACC) complex. Biotin carboxylase (BC) catalyzes the carboxylation of biotin on its carrier protein (BCCP) and then the CO(2) group is transferred by the transcarboxylase to acetyl-CoA to form malonyl-CoA. This Salinibacter ruber (strain DSM 13855 / M31) protein is Acetyl-coenzyme A carboxylase carboxyl transferase subunit beta.